The chain runs to 298 residues: ADP/ATP translocase 1 (298 aa).

Over 1–7 (MGDHAWS) the chain is Mitochondrial intermembrane. Gly-2 is modified (N-acetylglycine). A Solcar 1 repeat occupies 6–98 (WSFLKDFLAG…FAFKDKYKQL (93 aa)). At Ser-7 the chain carries Phosphoserine. A helical transmembrane segment spans residues 8 to 37 (FLKDFLAGGVAAAVSKTAVAPIERVKLLLQ). Residues 38-74 (VQHASKQISAEKQYKGIIDCVVRIPKEQGFLSFWRGN) are Mitochondrial matrix-facing. An N6,N6,N6-trimethyllysine modification is found at Lys-52. A helical transmembrane segment spans residues 75-99 (LANVIRYFPTQALNFAFKDKYKQLF). The ADP site is built by Arg-80 and Lys-92. Residues 100 to 109 (LGGVDRHKQF) lie on the Mitochondrial intermembrane side of the membrane. A helical transmembrane segment spans residues 110 to 130 (WRYFAGNLASGGAAGATSLCF). Solcar repeat units lie at residues 111-201 (RYFA…AKGM) and 212-297 (VSWM…IKKY). At 131–178 (VYPLDFARTRLAADVGKGAAQREFHGLGDCIIKIFKSDGLRGLYQGFN) the chain is on the mitochondrial matrix side. Lys-147 bears the N6-succinyllysine mark. The residue at position 160 (Cys-160) is an S-nitrosocysteine. A helical transmembrane segment spans residues 179 to 199 (VSVQGIIIYRAAYFGVYDTAK). The Mitochondrial intermembrane segment spans residues 200-210 (GMLPDPKNVHI). Residues 211 to 231 (FVSWMIAQSVTAVAGLVSYPF) form a helical membrane-spanning segment. Topologically, residues 232-273 (DTVRRRMMMQSGRKGADIMYTGTVDCWRKIAKDEGAKAFFKG) are mitochondrial matrix. Arg-235 provides a ligand contact to ADP. The important for transport activity stretch occupies residues 235–240 (RRRMMM). Residues 235–240 (RRRMMM) carry the Nucleotide carrier signature motif motif. Lys-245 and Lys-272 each carry N6-succinyllysine. Residues 274–291 (AWSNVLRGMGGAFVLVLY) form a helical membrane-spanning segment. The Mitochondrial intermembrane segment spans residues 292–298 (DEIKKYV).

This sequence belongs to the mitochondrial carrier (TC 2.A.29) family. As to quaternary structure, monomer. Found in a complex with ARL2, ARL2BP and SLC25A4/ANT1. Interacts with ARL2BP. Interacts with ARHGAP11B, thereby inhibiting the mitochondrial permeability transition pore (mPTP). Interacts with TIMM44; leading to inhibit the presequence translocase TIMM23, thereby promoting stabilization of PINK1. (Microbial infection) Interacts with HIV-1 Vpr. Under cell death induction, transglutaminated by TGM2. Transglutamination leads to formation of covalent cross-links between a glutamine and the epsilon-amino group of a lysine residue, forming polymers. Expressed in erythrocytes (at protein level).

It is found in the mitochondrion inner membrane. Its subcellular location is the membrane. It catalyses the reaction ADP(in) + ATP(out) = ADP(out) + ATP(in). It carries out the reaction H(+)(in) = H(+)(out). The matrix-open state (m-state) is inhibited by the membrane-permeable bongkrekic acid (BKA). The cytoplasmic-open state (c-state) is inhibited by the membrane-impermeable toxic inhibitor carboxyatractyloside (CATR). Proton transporter activity is inhibited by ADP:ATP antiporter activity. ADP:ATP antiporter that mediates import of ADP into the mitochondrial matrix for ATP synthesis, and export of ATP out to fuel the cell. Cycles between the cytoplasmic-open state (c-state) and the matrix-open state (m-state): operates by the alternating access mechanism with a single substrate-binding site intermittently exposed to either the cytosolic (c-state) or matrix (m-state) side of the inner mitochondrial membrane. In addition to its ADP:ATP antiporter activity, also involved in mitochondrial uncoupling and mitochondrial permeability transition pore (mPTP) activity. Plays a role in mitochondrial uncoupling by acting as a proton transporter: proton transport uncouples the proton flows via the electron transport chain and ATP synthase to reduce the efficiency of ATP production and cause mitochondrial thermogenesis. Proton transporter activity is inhibited by ADP:ATP antiporter activity, suggesting that SLC25A4/ANT1 acts as a master regulator of mitochondrial energy output by maintaining a delicate balance between ATP production (ADP:ATP antiporter activity) and thermogenesis (proton transporter activity). Proton transporter activity requires free fatty acids as cofactor, but does not transport it. Also plays a key role in mPTP opening, a non-specific pore that enables free passage of the mitochondrial membranes to solutes of up to 1.5 kDa, and which contributes to cell death. It is however unclear if SLC25A4/ANT1 constitutes a pore-forming component of mPTP or regulates it. Acts as a regulator of mitophagy independently of ADP:ATP antiporter activity: promotes mitophagy via interaction with TIMM44, leading to inhibit the presequence translocase TIMM23, thereby promoting stabilization of PINK1. The protein is ADP/ATP translocase 1 of Homo sapiens (Human).